Consider the following 322-residue polypeptide: RNA-binding motif protein, X-linked 2 (322 aa).

Lys-8 is covalently cross-linked (Glycyl lysine isopeptide (Lys-Gly) (interchain with G-Cter in SUMO2)). The 79-residue stretch at 36-114 (AWIFLGGLPY…RTIRVDHVSN (79 aa)) folds into the RRM domain. The segment at 134 to 322 (KGCGARTPSP…SSNPSDRWRH (189 aa)) is disordered. Thr-140 is modified (phosphothreonine). Ser-149 carries the phosphoserine modification. Basic residues predominate over residues 155 to 171 (TKKHKKDKKEKKKKKKE). 2 positions are modified to phosphoserine: Ser-186 and Ser-188. Residues 195–223 (KEKDDTGPKKHSSKNSERAQKSEPREGQK) are compositionally biased toward basic and acidic residues. Position 232 is a phosphoserine (Ser-232). The segment covering 240-274 (RELKKEKPKHEHKSSSRREAREEKTRIRDRGRSSD) has biased composition (basic and acidic residues). Lys-243 participates in a covalent cross-link: Glycyl lysine isopeptide (Lys-Gly) (interchain with G-Cter in SUMO2). Ser-272 is modified (phosphoserine). Positions 289-308 (YRSRSRSRDKSHRHKRARRS) are enriched in basic residues. Ser-314 carries the phosphoserine modification.

It belongs to the IST3 family. In terms of assembly, part of the activated spliceosome B/catalytic step 1 spliceosome, one of the forms of the spliceosome which has a well-formed active site but still cannot catalyze the branching reaction and is composed of at least 52 proteins, the U2, U5 and U6 snRNAs and the pre-mRNA. Component of the minor spliceosome, which splices U12-type introns.

The protein resides in the nucleus. Involved in pre-mRNA splicing as component of the activated spliceosome. As a component of the minor spliceosome, involved in the splicing of U12-type introns in pre-mRNAs. This chain is RNA-binding motif protein, X-linked 2 (RBMX2), found in Homo sapiens (Human).